We begin with the raw amino-acid sequence, 588 residues long: Synaptotagmin-3 (588 aa).

Topologically, residues 1–54 are vesicular; sequence MSGDYEDDLCRRALILVSDLCARIRDADTNDRCQEFNELRIRGYPRGPDADISV. A cysteine motif region spans residues 10–34; that stretch reads CRRALILVSDLCARIRDADTNDRCQ. A helical membrane pass occupies residues 55 to 75; it reads SLLSVIVTFCGIVLLGVSLFV. The Cytoplasmic portion of the chain corresponds to 76 to 588; sequence SWKLCWVPWR…KGLSEKENSE (513 aa). Disordered regions lie at residues 129 to 161, 183 to 222, and 238 to 257; these read GGPH…PEPS, PSQT…VTSL, and QTLT…ALPL. Over residues 183–205 the composition is skewed to low complexity; it reads PSQTSPELPSEGGTGSGLLLLPP. Residues 213–222 show a composition bias toward polar residues; it reads AQSHQQVTSL. An Omega-N-methylarginine modification is found at R286. C2 domains lie at 297 to 418 and 429 to 563; these read PCGR…PLWR and DLGE…EHWH. Ca(2+) is bound by residues D328, D334, D386, F387, D388, S391, D394, D460, D466, D520, and D522.

This sequence belongs to the synaptotagmin family. In terms of assembly, homodimer; disulfide-linked via the cysteine motif. Can also form heterodimers with SYT6, SYT9 and SYT10. Requires Ca(2+) as cofactor. In terms of tissue distribution, brain, various endocrine tissues and hormone-secreting clonal cells.

The protein localises to the cell membrane. It localises to the cytoplasmic vesicle. The protein resides in the secretory vesicle membrane. Functionally, ca(2+) sensor involved in Ca(2+)-dependent exocytosis of secretory vesicles through Ca(2+) and phospholipid binding to the C2 domain. Ca(2+) induces binding of the C2-domains to phospholipid membranes and to assembled SNARE-complexes; both actions contribute to triggering exocytosis. Plays a role in dendrite formation by melanocytes. This Rattus norvegicus (Rat) protein is Synaptotagmin-3 (Syt3).